Reading from the N-terminus, the 142-residue chain is uncharacterized protein (142 aa).

One can recognise an N-acetyltransferase domain in the interval 1–138; sequence MLEKLAEAHP…SFMILVKPLA (138 aa).

This is an uncharacterized protein from Bacillus subtilis (strain 168).